The chain runs to 214 residues: MSKTLTIALSKGRILGETLPLLEKANIVPVEDISKSRKLIFDTNHEHIKLVILRATDVPTYVDHGVADFGVAGKDVLMEASTKNLYELLDLKIAKCRLMTAGVVGQPLPNRRLKVASKFIKTAKAYFAEQGIQADVIKLYGAMELAPIMGLADLIVDIVDTGNTLKANGLEARELIAPISTRLVVNKAAYKTKYSEIEPILEMIRRAVEDNEGK.

This sequence belongs to the ATP phosphoribosyltransferase family. Short subfamily. Heteromultimer composed of HisG and HisZ subunits.

It is found in the cytoplasm. It carries out the reaction 1-(5-phospho-beta-D-ribosyl)-ATP + diphosphate = 5-phospho-alpha-D-ribose 1-diphosphate + ATP. Its pathway is amino-acid biosynthesis; L-histidine biosynthesis; L-histidine from 5-phospho-alpha-D-ribose 1-diphosphate: step 1/9. Functionally, catalyzes the condensation of ATP and 5-phosphoribose 1-diphosphate to form N'-(5'-phosphoribosyl)-ATP (PR-ATP). Has a crucial role in the pathway because the rate of histidine biosynthesis seems to be controlled primarily by regulation of HisG enzymatic activity. This Marinomonas sp. (strain MWYL1) protein is ATP phosphoribosyltransferase.